The following is a 759-amino-acid chain: Holliday junction resolvase YEN1 (759 aa).

Disordered stretches follow at residues 62–83, 498–518, and 683–702; these read RSRS…SQEY, SQSP…TRRQ, and KSRT…KSRS. Low complexity predominate over residues 500 to 512; it reads SPLKRSNSPSRSK. Ser730 and Ser731 each carry phosphoserine.

The protein belongs to the XPG/RAD2 endonuclease family. GEN subfamily.

It is found in the cytoplasm. The protein localises to the nucleus. Functionally, endonuclease which resolves Holliday junctions by the introduction of symmetrically related cuts across the junction point, to produce nicked duplex products in which the nicks can be readily ligated. Four-way DNA intermediates, also known as Holliday junctions, are formed during homologous recombination and DNA repair, and their resolution is necessary for proper chromosome segregation. Involved in DNA-damage repair in vegetative cells. The sequence is that of Holliday junction resolvase YEN1 (YEN1) from Saccharomyces cerevisiae (strain ATCC 204508 / S288c) (Baker's yeast).